The primary structure comprises 297 residues: Flavin-dependent thymidylate synthase (297 aa).

The ThyX domain maps to 41-251; it reads GFVRLVDYMG…PLTYAAFVEY (211 aa). Residues Thr87, 110–112, and Glu118 each bind FAD; that span reads RHR. DUMP is bound by residues 107-110, 118-122, and Arg190; these read QWVR and EYSAR. A ThyX motif motif is present at residues 110–120; that stretch reads RHRTANVNEYS. FAD-binding positions include 206–208 and His212; that span reads DLH. Residue Arg217 coordinates dUMP. Arg217 serves as the catalytic Involved in ionization of N3 of dUMP, leading to its activation.

It belongs to the thymidylate synthase ThyX family. Homotetramer. The cofactor is FAD.

It catalyses the reaction dUMP + (6R)-5,10-methylene-5,6,7,8-tetrahydrofolate + NADPH + H(+) = dTMP + (6S)-5,6,7,8-tetrahydrofolate + NADP(+). Its pathway is pyrimidine metabolism; dTTP biosynthesis. Catalyzes the reductive methylation of 2'-deoxyuridine-5'-monophosphate (dUMP) to 2'-deoxythymidine-5'-monophosphate (dTMP) while utilizing 5,10-methylenetetrahydrofolate (mTHF) as the methyl donor, and NADPH and FADH(2) as the reductant. This Ehrlichia ruminantium (strain Gardel) protein is Flavin-dependent thymidylate synthase.